The chain runs to 196 residues: Imidazoleglycerol-phosphate dehydratase (196 aa).

Belongs to the imidazoleglycerol-phosphate dehydratase family.

Its subcellular location is the cytoplasm. The catalysed reaction is D-erythro-1-(imidazol-4-yl)glycerol 3-phosphate = 3-(imidazol-4-yl)-2-oxopropyl phosphate + H2O. It functions in the pathway amino-acid biosynthesis; L-histidine biosynthesis; L-histidine from 5-phospho-alpha-D-ribose 1-diphosphate: step 6/9. The polypeptide is Imidazoleglycerol-phosphate dehydratase (Phenylobacterium zucineum (strain HLK1)).